We begin with the raw amino-acid sequence, 220 residues long: MPKFFCDYCDVYLTHDSISVRKAHNSGRNHLRNVVDYYQQIGHEKAQSVIDSITSSYAAEGQPMPSVHSTTPGAGGAGSVGAGGFPLLPPSAAAAAAAAGLQMPLSLPPPPFGFPARPGMMVPPPPPPFGFPPPPLGRGGAAAGFSGFPGMDAAGGGAGGGVQPQLLPGMVVPPGFVPPPGGMMVPPPGAGFTMPPPLGGFPAGAPLPGAPPGYGPPGAK.

The segment at 4–36 adopts a Matrin-type zinc-finger fold; sequence FFCDYCDVYLTHDSISVRKAHNSGRNHLRNVVD. The tract at residues 197 to 220 is disordered; that stretch reads PLGGFPAGAPLPGAPPGYGPPGAK. The span at 208-220 shows a compositional bias: pro residues; sequence PGAPPGYGPPGAK.

The protein belongs to the U1 small nuclear ribonucleoprotein C family. In terms of assembly, U1 snRNP is composed of the 7 core Sm proteins B/B', D1, D2, D3, E, F and G that assemble in a heptameric protein ring on the Sm site of the small nuclear RNA to form the core snRNP, and at least 3 U1 snRNP-specific proteins U1-70K, U1-A and U1-C. U1-C interacts with U1 snRNA and the 5' splice-site region of the pre-mRNA.

It is found in the nucleus. Its function is as follows. Component of the spliceosomal U1 snRNP, which is essential for recognition of the pre-mRNA 5' splice-site and the subsequent assembly of the spliceosome. U1-C is directly involved in initial 5' splice-site recognition for both constitutive and regulated alternative splicing. The interaction with the 5' splice-site seems to precede base-pairing between the pre-mRNA and the U1 snRNA. Stimulates commitment or early (E) complex formation by stabilizing the base pairing of the 5' end of the U1 snRNA and the 5' splice-site region. This is U1 small nuclear ribonucleoprotein C from Tuber melanosporum (strain Mel28) (Perigord black truffle).